An 840-amino-acid polypeptide reads, in one-letter code: Protein translocase subunit SecA (840 aa).

ATP is bound by residues Gln85, 103–107, and Asp492; that span reads GEGKT. Residues 787 to 821 are disordered; sequence QRERVAKETGASHGGDSQEIKKKPVKKEPKVGRND. Positions 802–819 are enriched in basic and acidic residues; it reads DSQEIKKKPVKKEPKVGR. 4 residues coordinate Zn(2+): Cys823, Cys825, Cys834, and Cys835.

Belongs to the SecA family. As to quaternary structure, monomer and homodimer. Part of the essential Sec protein translocation apparatus which comprises SecA, SecYEG and auxiliary proteins SecDF. Other proteins may also be involved. Requires Zn(2+) as cofactor.

The protein resides in the cell membrane. It is found in the cytoplasm. It carries out the reaction ATP + H2O + cellular proteinSide 1 = ADP + phosphate + cellular proteinSide 2.. Part of the Sec protein translocase complex. Interacts with the SecYEG preprotein conducting channel. Has a central role in coupling the hydrolysis of ATP to the transfer of proteins into and across the cell membrane, serving as an ATP-driven molecular motor driving the stepwise translocation of polypeptide chains across the membrane. This is Protein translocase subunit SecA from Clostridium perfringens (strain 13 / Type A).